The following is a 270-amino-acid chain: Phosphonoacetaldehyde hydrolase (270 aa).

Catalysis depends on D11, which acts as the Nucleophile. 2 residues coordinate Mg(2+): D11 and A13. K53 (schiff-base intermediate with substrate) is an active-site residue. D187 is a Mg(2+) binding site.

This sequence belongs to the HAD-like hydrolase superfamily. PhnX family. In terms of assembly, homodimer. Requires Mg(2+) as cofactor.

It carries out the reaction phosphonoacetaldehyde + H2O = acetaldehyde + phosphate + H(+). Functionally, involved in phosphonate degradation. The polypeptide is Phosphonoacetaldehyde hydrolase (Salmonella choleraesuis (strain SC-B67)).